The primary structure comprises 343 residues: Protein RecA (343 aa).

66-73 (GPESSGKT) lines the ATP pocket.

The protein belongs to the RecA family.

It localises to the cytoplasm. Can catalyze the hydrolysis of ATP in the presence of single-stranded DNA, the ATP-dependent uptake of single-stranded DNA by duplex DNA, and the ATP-dependent hybridization of homologous single-stranded DNAs. It interacts with LexA causing its activation and leading to its autocatalytic cleavage. This Dechloromonas aromatica (strain RCB) protein is Protein RecA.